Reading from the N-terminus, the 233-residue chain is Biosynthetic peptidoglycan transglycosylase (233 aa).

The helical transmembrane segment at 8–28 (LIALPVGIFIFFNAYVYGNII) threads the bilayer.

It belongs to the glycosyltransferase 51 family.

Its subcellular location is the cell inner membrane. It carries out the reaction [GlcNAc-(1-&gt;4)-Mur2Ac(oyl-L-Ala-gamma-D-Glu-L-Lys-D-Ala-D-Ala)](n)-di-trans,octa-cis-undecaprenyl diphosphate + beta-D-GlcNAc-(1-&gt;4)-Mur2Ac(oyl-L-Ala-gamma-D-Glu-L-Lys-D-Ala-D-Ala)-di-trans,octa-cis-undecaprenyl diphosphate = [GlcNAc-(1-&gt;4)-Mur2Ac(oyl-L-Ala-gamma-D-Glu-L-Lys-D-Ala-D-Ala)](n+1)-di-trans,octa-cis-undecaprenyl diphosphate + di-trans,octa-cis-undecaprenyl diphosphate + H(+). The protein operates within cell wall biogenesis; peptidoglycan biosynthesis. Functionally, peptidoglycan polymerase that catalyzes glycan chain elongation from lipid-linked precursors. The chain is Biosynthetic peptidoglycan transglycosylase from Neisseria meningitidis serogroup C / serotype 2a (strain ATCC 700532 / DSM 15464 / FAM18).